Consider the following 274-residue polypeptide: Reaction center protein L chain (274 aa).

The Cytoplasmic segment spans residues alanine 2–valine 32. Residues glycine 33–alanine 53 form a helical membrane-spanning segment. Over alanine 54–glutamate 83 the chain is Periplasmic. Residues glycine 84–lysine 111 form a helical membrane-spanning segment. The Cytoplasmic segment spans residues leucine 112 to glycine 115. The helical transmembrane segment at tryptophan 116–leucine 139 threads the bilayer. The Periplasmic portion of the chain corresponds to leucine 140–tyrosine 170. (7R,8Z)-bacteriochlorophyll b-binding residues include histidine 154 and histidine 174. A helical transmembrane segment spans residues asparagine 171–valine 198. Residue histidine 191 participates in Fe cation binding. Residues alanine 199–isoleucine 225 lie on the Cytoplasmic side of the membrane. Phenylalanine 217 is a binding site for a ubiquinone. A helical transmembrane segment spans residues glycine 226 to threonine 249. Histidine 231 contacts Fe cation. The Periplasmic portion of the chain corresponds to isoleucine 250–serine 274.

Belongs to the reaction center PufL/M/PsbA/D family. Reaction center is composed of four bacteriochlorophylls, two bacteriopheophytins, two ubiquinones, one iron, and three highly hydrophobic polypeptide chains (designated L, M, and H).

It localises to the cellular chromatophore membrane. Its function is as follows. The reaction center is a membrane-bound complex that mediates the initial photochemical event in the electron transfer process of photosynthesis. This Blastochloris viridis (Rhodopseudomonas viridis) protein is Reaction center protein L chain (pufL).